A 69-amino-acid polypeptide reads, in one-letter code: DNA gyrase inhibitor YacG (69 aa).

Positions 13, 16, 32, and 36 each coordinate Zn(2+).

This sequence belongs to the DNA gyrase inhibitor YacG family. As to quaternary structure, interacts with GyrB. Requires Zn(2+) as cofactor.

In terms of biological role, inhibits all the catalytic activities of DNA gyrase by preventing its interaction with DNA. Acts by binding directly to the C-terminal domain of GyrB, which probably disrupts DNA binding by the gyrase. In Neisseria gonorrhoeae (strain ATCC 700825 / FA 1090), this protein is DNA gyrase inhibitor YacG.